A 306-amino-acid chain; its full sequence is Oxygen-dependent coproporphyrinogen-III oxidase (306 aa).

S99 is a binding site for substrate. Residues H103 and H113 each contribute to the a divalent metal cation site. H113 (proton donor) is an active-site residue. Residue 115–117 (NVR) participates in substrate binding. The a divalent metal cation site is built by H152 and H182. Residues 247-282 (YVEFNLVFDRGTLFGLQSGGRTESILMSMPPVANWR) form an important for dimerization region. 265–267 (GGR) is a substrate binding site.

The protein belongs to the aerobic coproporphyrinogen-III oxidase family. In terms of assembly, homodimer. A divalent metal cation serves as cofactor.

The protein localises to the cytoplasm. It catalyses the reaction coproporphyrinogen III + O2 + 2 H(+) = protoporphyrinogen IX + 2 CO2 + 2 H2O. It functions in the pathway porphyrin-containing compound metabolism; protoporphyrin-IX biosynthesis; protoporphyrinogen-IX from coproporphyrinogen-III (O2 route): step 1/1. Involved in the heme biosynthesis. Catalyzes the aerobic oxidative decarboxylation of propionate groups of rings A and B of coproporphyrinogen-III to yield the vinyl groups in protoporphyrinogen-IX. In Burkholderia ambifaria (strain MC40-6), this protein is Oxygen-dependent coproporphyrinogen-III oxidase.